A 130-amino-acid chain; its full sequence is Flagellar assembly factor FliW (130 aa).

This sequence belongs to the FliW family. In terms of assembly, interacts with translational regulator CsrA and flagellin(s).

It localises to the cytoplasm. Acts as an anti-CsrA protein, binds CsrA and prevents it from repressing translation of its target genes, one of which is flagellin. Binds to flagellin and participates in the assembly of the flagellum. The sequence is that of Flagellar assembly factor FliW from Clostridioides difficile (strain 630) (Peptoclostridium difficile).